A 418-amino-acid chain; its full sequence is MNIFEELKARGLVFQTTDEQALVKALTEGQVSYYTGYDPTADSLHLGHLVAILTSRRLQLAGHKPYALVGGATGLIGDPSFKDAERSLQTKETVLEWSDKIKGQLSTFLDFENGDNKAELVNNYDWFSQISFIDFLRDVGKYFTVNYMMSKDSVKKRIETGISYTEFAYQIMQGYDFYELNDKHNVTLQIGGSDQWGNMTAGTELLRKKADKTGHVMTVPLITDSTGKKFGKSEGNAVWLDADKTSPYEMYQFWLNVMDDDAVRFLKIFTFLSLDEIAEIETQFNAARHERLAQKTLAREVVTLVHGEEAYKQALNITEQLFAGNIKNLSANELKQGLSNVPNYHVQSEDSLNLVDMLVTAGISPSKRQAREDVQNGAIYINGDRVQDLDYQLSNDDKIDDQLTVIRRGKKKYAVLTY.

L-tyrosine is bound at residue Y34. The short motif at 39-48 (PTADSLHLGH) is the 'HIGH' region element. Residues Y169 and Q173 each contribute to the L-tyrosine site. The 'KMSKS' region motif lies at 229-233 (KFGKS). K232 lines the ATP pocket. Residues 352–418 (LNLVDMLVTA…GKKKYAVLTY (67 aa)) form the S4 RNA-binding domain.

This sequence belongs to the class-I aminoacyl-tRNA synthetase family. TyrS type 1 subfamily. Homodimer.

The protein localises to the cytoplasm. It catalyses the reaction tRNA(Tyr) + L-tyrosine + ATP = L-tyrosyl-tRNA(Tyr) + AMP + diphosphate + H(+). Catalyzes the attachment of tyrosine to tRNA(Tyr) in a two-step reaction: tyrosine is first activated by ATP to form Tyr-AMP and then transferred to the acceptor end of tRNA(Tyr). In Streptococcus pyogenes serotype M12 (strain MGAS2096), this protein is Tyrosine--tRNA ligase.